We begin with the raw amino-acid sequence, 318 residues long: Transaldolase (318 aa).

Catalysis depends on K132, which acts as the Schiff-base intermediate with substrate.

This sequence belongs to the transaldolase family. Type 1 subfamily. In terms of assembly, homodimer.

Its subcellular location is the cytoplasm. It carries out the reaction D-sedoheptulose 7-phosphate + D-glyceraldehyde 3-phosphate = D-erythrose 4-phosphate + beta-D-fructose 6-phosphate. The protein operates within carbohydrate degradation; pentose phosphate pathway; D-glyceraldehyde 3-phosphate and beta-D-fructose 6-phosphate from D-ribose 5-phosphate and D-xylulose 5-phosphate (non-oxidative stage): step 2/3. In terms of biological role, transaldolase is important for the balance of metabolites in the pentose-phosphate pathway. This is Transaldolase from Shewanella putrefaciens (strain CN-32 / ATCC BAA-453).